The primary structure comprises 149 residues: Ribonuclease pancreatic (149 aa).

An N-terminal signal peptide occupies residues 1–25; it reads MGLEKSFILFPLLILVLGWVQSSLG. Substrate contacts are provided by K32 and R35. H37 serves as the catalytic Proton acceptor. 4 disulfide bridges follow: C51-C109, C65-C120, C83-C135, and C90-C97. N59 is a glycosylation site (N-linked (GlcNAc...) asparagine). 66-70 lines the substrate pocket; it reads KPVNT. N-linked (GlcNAc...) asparagine glycosylation is present at N87. Positions 91 and 110 each coordinate substrate. H144 functions as the Proton donor in the catalytic mechanism.

The protein belongs to the pancreatic ribonuclease family. Monomer. Interacts with and forms tight 1:1 complexes with RNH1. Dimerization of two such complexes may occur. Interaction with RNH1 inhibits this protein. In terms of tissue distribution, pancreas.

It localises to the secreted. The enzyme catalyses an [RNA] containing cytidine + H2O = an [RNA]-3'-cytidine-3'-phosphate + a 5'-hydroxy-ribonucleotide-3'-[RNA].. It catalyses the reaction an [RNA] containing uridine + H2O = an [RNA]-3'-uridine-3'-phosphate + a 5'-hydroxy-ribonucleotide-3'-[RNA].. Functionally, endonuclease that catalyzes the cleavage of RNA on the 3' side of pyrimidine nucleotides. Acts on single-stranded and double-stranded RNA. The protein is Ribonuclease pancreatic (RNASE1) of Abrothrix jelskii (Jelski's altiplano mouse).